The following is a 276-amino-acid chain: MNAAIRVERLNKTFAGKQALFDLGLAIQPGEMVALIGASGSGKSTLLRHLAGLACCDRSAGGRIEVLGREVQATGRLHGEVRRLRADIGYIFQQFNLVTRLSVLDNVLLGFLGRMPRWRGSLGMFSDEQKRQAMAALERVGLAERAAQRASTLSGGQQQRVAIARALTQQAEVILADEPIASLDPESARKVMEILADINRQDGKTVVVTLHQVDYALRYCSRAVALKGGRIHYDGPSAALSDRLLNDLYGADLDASLLFSDRARNAEPRSLQLVNG.

An ABC transporter domain is found at 5–253 (IRVERLNKTF…LLNDLYGADL (249 aa)). 37–44 (GASGSGKS) provides a ligand contact to ATP.

The protein belongs to the ABC transporter superfamily. Phosphonates importer (TC 3.A.1.9.1) family. The complex is composed of two ATP-binding proteins (PhnC), two transmembrane proteins (PhnE) and a solute-binding protein (PhnD).

The protein resides in the cell inner membrane. The enzyme catalyses phosphonate(out) + ATP + H2O = phosphonate(in) + ADP + phosphate + H(+). Its function is as follows. Part of the ABC transporter complex PhnCDE involved in phosphonates import. Responsible for energy coupling to the transport system. The polypeptide is Phosphonates import ATP-binding protein PhnC (Stutzerimonas stutzeri (Pseudomonas stutzeri)).